A 252-amino-acid polypeptide reads, in one-letter code: Coenzyme F420:L-glutamate ligase (252 aa).

Residues 11–14 (MPLV), 45–46 (ET), and Lys50 each bind GTP. Asp115 is an a divalent metal cation binding site. Asn118 is a binding site for GTP. A divalent metal cation-binding residues include Asp156, Thr157, and Gln214. Position 212–219 (212–219 (MGQADEGV)) interacts with GTP.

The protein belongs to the CofE family. As to quaternary structure, homodimer. Requires Mg(2+) as cofactor. Mn(2+) is required as a cofactor. K(+) serves as cofactor.

The enzyme catalyses oxidized coenzyme F420-0 + GTP + L-glutamate = oxidized coenzyme F420-1 + GDP + phosphate + H(+). It catalyses the reaction oxidized coenzyme F420-1 + GTP + L-glutamate = oxidized coenzyme F420-2 + GDP + phosphate + H(+). It participates in cofactor biosynthesis; coenzyme F420 biosynthesis. In terms of biological role, catalyzes the GTP-dependent successive addition of two or more gamma-linked L-glutamates to the L-lactyl phosphodiester of 7,8-didemethyl-8-hydroxy-5-deazariboflavin (F420-0) to form coenzyme F420-0-glutamyl-glutamate (F420-2) or polyglutamated F420 derivatives. The protein is Coenzyme F420:L-glutamate ligase of Methanothermobacter thermautotrophicus (strain ATCC 29096 / DSM 1053 / JCM 10044 / NBRC 100330 / Delta H) (Methanobacterium thermoautotrophicum).